The following is a 235-amino-acid chain: Peptidyl-tRNA hydrolase (235 aa).

Position 14 (Tyr-14) interacts with tRNA. The active-site Proton acceptor is His-19. TRNA contacts are provided by Phe-64, Asn-66, and Asn-112. The tract at residues 188–235 (APARNSGTRPDNPGKGSPEKPAAKPANDPIAEPPSLSDRLRALTERFR) is disordered. A compositionally biased stretch (basic and acidic residues) spans 225–235 (DRLRALTERFR).

It belongs to the PTH family. In terms of assembly, monomer.

It localises to the cytoplasm. The enzyme catalyses an N-acyl-L-alpha-aminoacyl-tRNA + H2O = an N-acyl-L-amino acid + a tRNA + H(+). Hydrolyzes ribosome-free peptidyl-tRNAs (with 1 or more amino acids incorporated), which drop off the ribosome during protein synthesis, or as a result of ribosome stalling. Functionally, catalyzes the release of premature peptidyl moieties from peptidyl-tRNA molecules trapped in stalled 50S ribosomal subunits, and thus maintains levels of free tRNAs and 50S ribosomes. This chain is Peptidyl-tRNA hydrolase, found in Paracoccus denitrificans (strain Pd 1222).